We begin with the raw amino-acid sequence, 31 residues long: Photosystem I reaction center subunit XII (31 aa).

A helical transmembrane segment spans residues 7-26; that stretch reads QIYIALLTALIPAFFALKLG.

It belongs to the PsaM family.

It is found in the plastid. The protein localises to the chloroplast thylakoid membrane. The polypeptide is Photosystem I reaction center subunit XII (Euglena mutabilis).